A 432-amino-acid chain; its full sequence is Glutamate-1-semialdehyde 2,1-aminomutase 2 (432 aa).

The residue at position 268 (Lys-268) is an N6-(pyridoxal phosphate)lysine.

This sequence belongs to the class-III pyridoxal-phosphate-dependent aminotransferase family. HemL subfamily. Homodimer. Requires pyridoxal 5'-phosphate as cofactor.

Its subcellular location is the cytoplasm. The catalysed reaction is (S)-4-amino-5-oxopentanoate = 5-aminolevulinate. The protein operates within porphyrin-containing compound metabolism; protoporphyrin-IX biosynthesis; 5-aminolevulinate from L-glutamyl-tRNA(Glu): step 2/2. The sequence is that of Glutamate-1-semialdehyde 2,1-aminomutase 2 from Listeria welshimeri serovar 6b (strain ATCC 35897 / DSM 20650 / CCUG 15529 / CIP 8149 / NCTC 11857 / SLCC 5334 / V8).